Here is a 319-residue protein sequence, read N- to C-terminus: NADH-quinone oxidoreductase subunit H 2 (319 aa).

Transmembrane regions (helical) follow at residues 1–21 (MIGM…LLVL), 77–97 (ILAP…VAIG), 107–127 (VGLL…VLGA), 147–167 (LAYE…AGSF), 179–199 (VWFV…GIAA), 214–234 (LIAG…FLGE), 238–258 (VLLV…GPWL), 262–282 (VWFG…RATL), and 293–313 (FAWK…GIVV).

This sequence belongs to the complex I subunit 1 family. As to quaternary structure, NDH-1 is composed of 14 different subunits. Subunits NuoA, H, J, K, L, M, N constitute the membrane sector of the complex.

It is found in the cell inner membrane. It carries out the reaction a quinone + NADH + 5 H(+)(in) = a quinol + NAD(+) + 4 H(+)(out). Functionally, NDH-1 shuttles electrons from NADH, via FMN and iron-sulfur (Fe-S) centers, to quinones in the respiratory chain. The immediate electron acceptor for the enzyme in this species is believed to be ubiquinone. Couples the redox reaction to proton translocation (for every two electrons transferred, four hydrogen ions are translocated across the cytoplasmic membrane), and thus conserves the redox energy in a proton gradient. This subunit may bind ubiquinone. This Rhodopseudomonas palustris (strain ATCC BAA-98 / CGA009) protein is NADH-quinone oxidoreductase subunit H 2.